Reading from the N-terminus, the 201-residue chain is Holliday junction branch migration complex subunit RuvA (201 aa).

A domain I region spans residues 1–63; the sequence is MYDYIKGTVT…EDNISLFGFQ (63 aa). Residues 64–142 are domain II; that stretch reads TTEERYLFKK…DVVASEIVYV (79 aa). Positions 143–153 are flexible linker; sequence APENDMVAGLS. The domain III stretch occupies residues 153–201; that stretch reads SPQLEEAVLALEALGYSTRELKKVIPKLAKEADLTSDAYIKLALQLMTK.

This sequence belongs to the RuvA family. As to quaternary structure, homotetramer. Forms an RuvA(8)-RuvB(12)-Holliday junction (HJ) complex. HJ DNA is sandwiched between 2 RuvA tetramers; dsDNA enters through RuvA and exits via RuvB. An RuvB hexamer assembles on each DNA strand where it exits the tetramer. Each RuvB hexamer is contacted by two RuvA subunits (via domain III) on 2 adjacent RuvB subunits; this complex drives branch migration. In the full resolvosome a probable DNA-RuvA(4)-RuvB(12)-RuvC(2) complex forms which resolves the HJ.

It is found in the cytoplasm. Its function is as follows. The RuvA-RuvB-RuvC complex processes Holliday junction (HJ) DNA during genetic recombination and DNA repair, while the RuvA-RuvB complex plays an important role in the rescue of blocked DNA replication forks via replication fork reversal (RFR). RuvA specifically binds to HJ cruciform DNA, conferring on it an open structure. The RuvB hexamer acts as an ATP-dependent pump, pulling dsDNA into and through the RuvAB complex. HJ branch migration allows RuvC to scan DNA until it finds its consensus sequence, where it cleaves and resolves the cruciform DNA. In Listeria monocytogenes serovar 1/2a (strain ATCC BAA-679 / EGD-e), this protein is Holliday junction branch migration complex subunit RuvA.